The sequence spans 214 residues: Cutinase CUT2 (214 aa).

Residues 1-18 form the signal peptide; the sequence is MQFSLSIATAILAATASA. The cysteines at positions 40 and 117 are disulfide-linked. Catalysis depends on serine 128, which acts as the Nucleophile. Residues cysteine 179 and cysteine 186 are joined by a disulfide bond. Residue aspartate 183 is part of the active site. Histidine 196 functions as the Proton donor/acceptor in the catalytic mechanism.

The protein belongs to the cutinase family. The 2 disulfide bonds play a critical role in holding the catalytic residues in juxta-position; reduction of the disulfide bridges results in the complete inactivation of the enzyme.

It localises to the secreted. It catalyses the reaction cutin + H2O = cutin monomers.. Functionally, catalyzes the hydrolysis of complex carboxylic polyesters found in the cell wall of plants. Degrades cutin, a macromolecule that forms the structure of the plant cuticle. Required for efficient penetration of the host plant cuticle by the appressorium during the initial stage of fungal infection. The protein is Cutinase CUT2 of Pyricularia oryzae (strain 70-15 / ATCC MYA-4617 / FGSC 8958) (Rice blast fungus).